We begin with the raw amino-acid sequence, 319 residues long: HTH-type transcriptional regulator YidZ (319 aa).

The 58-residue stretch at 8–65 (LDLNLLLCLQLLMQERSVTKAAKRMNVTPSAVSKSLAKLRAWFDDPLFVNSPLGLSPT) folds into the HTH lysR-type domain. The H-T-H motif DNA-binding region spans 25 to 44 (VTKAAKRMNVTPSAVSKSLA).

This sequence belongs to the LysR transcriptional regulatory family.

Its function is as follows. Involved in anaerobic NO protection. This chain is HTH-type transcriptional regulator YidZ, found in Escherichia coli O139:H28 (strain E24377A / ETEC).